The primary structure comprises 335 residues: MKSTSKIYTDKDSNLDVIKGKRIAVLGYGSQGRAWAQNLRDSGLNVVVGLEREGKSWELAKSDGIIPLHTKDAVKDADIIIFLVPDMVQRTLWLESVQPYMKKGADLVFAHGFNIHYKLIEPPKDSDVYMIAPKGPGPTVREYYKAGGGVPALVAIQQDVSGTALRKALAIAKGIGATRAGVIPTTFKEETETDLFGEQVILVGGIMELMKAAFETLVEEGYQPEVAYFETINELKMLVDLVYEKGITGMLKAVSDTAKYGGMTVGKFVINEDVRKRMKEALQRIKSGKFAEEWVEEYGRGMPTVVNGLSQVQNSLEEKIGNQLKDLIQKGKPKS.

Positions 5–185 (SKIYTDKDSN…GATRAGVIPT (181 aa)) constitute a KARI N-terminal Rossmann domain. NADP(+) is bound by residues 28-31 (YGSQ), Ser56, and 86-89 (DMVQ). The active site involves His111. Residue Gly137 participates in NADP(+) binding. The KARI C-terminal knotted domain occupies 186-331 (TFKEETETDL…NQLKDLIQKG (146 aa)). Mg(2+) contacts are provided by Asp194, Glu198, Glu230, and Glu234. Residue Ser255 participates in substrate binding.

The protein belongs to the ketol-acid reductoisomerase family. Mg(2+) is required as a cofactor.

The catalysed reaction is (2R)-2,3-dihydroxy-3-methylbutanoate + NADP(+) = (2S)-2-acetolactate + NADPH + H(+). The enzyme catalyses (2R,3R)-2,3-dihydroxy-3-methylpentanoate + NADP(+) = (S)-2-ethyl-2-hydroxy-3-oxobutanoate + NADPH + H(+). The protein operates within amino-acid biosynthesis; L-isoleucine biosynthesis; L-isoleucine from 2-oxobutanoate: step 2/4. Its pathway is amino-acid biosynthesis; L-valine biosynthesis; L-valine from pyruvate: step 2/4. Involved in the biosynthesis of branched-chain amino acids (BCAA). Catalyzes an alkyl-migration followed by a ketol-acid reduction of (S)-2-acetolactate (S2AL) to yield (R)-2,3-dihydroxy-isovalerate. In the isomerase reaction, S2AL is rearranged via a Mg-dependent methyl migration to produce 3-hydroxy-3-methyl-2-ketobutyrate (HMKB). In the reductase reaction, this 2-ketoacid undergoes a metal-dependent reduction by NADPH to yield (R)-2,3-dihydroxy-isovalerate. This is Ketol-acid reductoisomerase (NADP(+)) from Saccharolobus islandicus (strain L.S.2.15 / Lassen #1) (Sulfolobus islandicus).